A 25-amino-acid chain; its full sequence is Caerin-2.2 (25 aa).

The protein belongs to the frog skin active peptide (FSAP) family. Caerin subfamily. In terms of tissue distribution, expressed by the skin parotoid and/or rostral glands.

The protein localises to the secreted. Its function is as follows. Antimicrobial peptide, that adopts an alpha helical conformation which can disrupt bacterial membranes. Each caerin displays a different antimicrobial specificity. This Ranoidea caerulea (Green tree frog) protein is Caerin-2.2.